The primary structure comprises 442 residues: ATP-dependent protease ATPase subunit HslU (442 aa).

Residues isoleucine 18 and 60–65 (GVGKTE) each bind ATP. Residues 136 to 157 (LPKPKNDWESTETDSSSNTRQV) are disordered. Residues aspartate 255, glutamate 320, and arginine 392 each coordinate ATP.

This sequence belongs to the ClpX chaperone family. HslU subfamily. As to quaternary structure, a double ring-shaped homohexamer of HslV is capped on each side by a ring-shaped HslU homohexamer. The assembly of the HslU/HslV complex is dependent on binding of ATP.

It is found in the cytoplasm. Functionally, ATPase subunit of a proteasome-like degradation complex; this subunit has chaperone activity. The binding of ATP and its subsequent hydrolysis by HslU are essential for unfolding of protein substrates subsequently hydrolyzed by HslV. HslU recognizes the N-terminal part of its protein substrates and unfolds these before they are guided to HslV for hydrolysis. In Shewanella baltica (strain OS185), this protein is ATP-dependent protease ATPase subunit HslU.